The primary structure comprises 229 residues: Ribonuclease 3 (229 aa).

The RNase III domain occupies 5–127 (LARLERKLGY…LIGAIYLDAD (123 aa)). Glutamate 40 provides a ligand contact to Mg(2+). The active site involves aspartate 44. Mg(2+) contacts are provided by aspartate 113 and glutamate 116. Glutamate 116 is an active-site residue. The DRBM domain occupies 154-224 (DPKTRLQEFL…AAAALIALGV (71 aa)).

It belongs to the ribonuclease III family. As to quaternary structure, homodimer. Mg(2+) serves as cofactor.

It is found in the cytoplasm. The catalysed reaction is Endonucleolytic cleavage to 5'-phosphomonoester.. Its function is as follows. Digests double-stranded RNA. Involved in the processing of primary rRNA transcript to yield the immediate precursors to the large and small rRNAs (23S and 16S). Processes some mRNAs, and tRNAs when they are encoded in the rRNA operon. Processes pre-crRNA and tracrRNA of type II CRISPR loci if present in the organism. This chain is Ribonuclease 3, found in Pseudomonas putida (strain W619).